The chain runs to 335 residues: MSRITLSRFLIEQQRKAGTLPPELRLLIETVGRACKAISYSVNKGALADVLGEAGTGNIQGEAQKKLDVIANDFLLDANEWGGSLAAMASEEMELPYHIPGEYPKGEYLLMFDPLDGSSNIDVNISVGTIFSILRCPEGVTQPTETDFLQPGTHQVAAGYTVYGPQTMLVLTFGSGVHGFTLDREHGSFVLTHPDMKVPERTAEFAINMSNMRHWEAPVRRYVEEMLAGKTGPRGRDFNMRWVASMVAEVHRIITRGGIFMYPKDARDPSKAGKLRLMYEGNPMAFIIEQAGGAATNGHQRILDIVPTKLHERVAVFLGSKEEVELVTRYHSEQQ.

Mg(2+)-binding residues include Glu91, Asp113, Leu115, and Asp116. Residues 116–119 (DGSS), Asn208, and Lys274 each bind substrate. Mg(2+) is bound at residue Glu280.

Belongs to the FBPase class 1 family. Homotetramer. Requires Mg(2+) as cofactor.

The protein resides in the cytoplasm. The catalysed reaction is beta-D-fructose 1,6-bisphosphate + H2O = beta-D-fructose 6-phosphate + phosphate. The protein operates within carbohydrate biosynthesis; gluconeogenesis. The polypeptide is Fructose-1,6-bisphosphatase class 1 (Chromobacterium violaceum (strain ATCC 12472 / DSM 30191 / JCM 1249 / CCUG 213 / NBRC 12614 / NCIMB 9131 / NCTC 9757 / MK)).